Here is a 330-residue protein sequence, read N- to C-terminus: DNA-directed RNA polymerase subunit alpha (330 aa).

The segment at 1–231 (MQTNLLKPKT…EQLAVFAQLE (231 aa)) is alpha N-terminal domain (alpha-NTD). The interval 250–330 (FDPILLRPVD…NWPPAGLDKR (81 aa)) is alpha C-terminal domain (alpha-CTD).

Belongs to the RNA polymerase alpha chain family. As to quaternary structure, homodimer. The RNAP catalytic core consists of 2 alpha, 1 beta, 1 beta' and 1 omega subunit. When a sigma factor is associated with the core the holoenzyme is formed, which can initiate transcription.

The catalysed reaction is RNA(n) + a ribonucleoside 5'-triphosphate = RNA(n+1) + diphosphate. Its function is as follows. DNA-dependent RNA polymerase catalyzes the transcription of DNA into RNA using the four ribonucleoside triphosphates as substrates. This is DNA-directed RNA polymerase subunit alpha from Paracidovorax citrulli (strain AAC00-1) (Acidovorax citrulli).